A 579-amino-acid chain; its full sequence is Capsid vertex component 2 (579 aa).

Positions 1–50 are interaction with major capsid protein/MCP; sequence MTARYGFGSISFPNKCGIFLSTTKNFIAPNFPIHYWTAPAFELRGRMNPD.

Belongs to the herpesviridae CVC2 protein family. As to quaternary structure, heterodimerizes with CVC1. Interacts with major capsid protein/MCP and triplex capsid protein 1/TRX1 at the pentamer vertices. Interacts with the large tegument protein/LTP.

The protein localises to the virion. The protein resides in the host nucleus. In terms of biological role, capsid vertex-specific component that plays a role during viral DNA encapsidation, assuring correct genome cleavage and presumably stabilizing capsids that contain full-length viral genomes. Participates in the interaction between the capsid and the tegument through interaction with the large tegument protein/LTP. This is Capsid vertex component 2 from Homo sapiens (Human).